A 356-amino-acid polypeptide reads, in one-letter code: MNAILSDQKTFQAIIRVNQAIEDIRQGKMVVMVDDEDRENEGDLVYAASFSTPQKVNFMASHAKGLICVAISKKIANRLQLEPMVKKNDSSYETAFTITVDARTAATGISAGERDMTIKILADGGSHESELVRPGHIFPLIAKEGGALVRIGHTEGSVDLCRLAGQGDSAVICEIMKEDGTMARRPDLDIFCAKHELNIVYISDIVEYRMMNESLIRVIAESTTQFLGKDARRYDFVDHNDNHHIAYAFGNIKNRSAVKFHSIMPDNELLADTKKYNSLIQAIHYLQKSGGVLIFMDNGTQDMSKIREYGIGAQIIKHLGIENIELLSDSKNKEFVGISGFGLSVIKSTNVNETVA.

Residues Met-1–Met-211 are DHBP synthase. D-ribulose 5-phosphate-binding positions include Arg-38–Glu-39, Asp-43, Arg-150–Thr-154, and Glu-174. Glu-39 contributes to the Mg(2+) binding site. His-153 contributes to the Mg(2+) binding site. Residues Asn-212 to Ala-356 are GTP cyclohydrolase II-like.

It in the N-terminal section; belongs to the DHBP synthase family. In the C-terminal section; belongs to the GTP cyclohydrolase II family. The cofactor is Mg(2+). Requires Mn(2+) as cofactor.

It carries out the reaction D-ribulose 5-phosphate = (2S)-2-hydroxy-3-oxobutyl phosphate + formate + H(+). It functions in the pathway cofactor biosynthesis; riboflavin biosynthesis; 2-hydroxy-3-oxobutyl phosphate from D-ribulose 5-phosphate: step 1/1. Catalyzes the conversion of D-ribulose 5-phosphate to formate and 3,4-dihydroxy-2-butanone 4-phosphate. The chain is 3,4-dihydroxy-2-butanone 4-phosphate synthase (ribB) from Sulfurospirillum multivorans (Dehalospirillum multivorans).